The following is a 138-amino-acid chain: Putative thioredoxin-like protein 453L (138 aa).

Positions 3–138 (QQKYFEKPVY…FNNIVNYVMG (136 aa)) constitute a Thioredoxin domain. Residues C44 and C47 each act as nucleophile in the active site. An intrachain disulfide couples C44 to C47.

Belongs to the thioredoxin family.

Its function is as follows. Participates in various redox reactions through the reversible oxidation of its active center dithiol to a disulfide and catalyzes dithiol-disulfide exchange reactions. This chain is Putative thioredoxin-like protein 453L, found in Acheta domesticus (House cricket).